The following is a 61-amino-acid chain: Large ribosomal subunit protein uL30 (61 aa).

This sequence belongs to the universal ribosomal protein uL30 family. Part of the 50S ribosomal subunit.

This Corynebacterium diphtheriae (strain ATCC 700971 / NCTC 13129 / Biotype gravis) protein is Large ribosomal subunit protein uL30.